Here is a 249-residue protein sequence, read N- to C-terminus: Exosome complex component Rrp41 (249 aa).

Belongs to the RNase PH family. Rrp41 subfamily. As to quaternary structure, component of the archaeal exosome complex. Forms a hexameric ring-like arrangement composed of 3 Rrp41-Rrp42 heterodimers. The hexameric ring associates with a trimer of Rrp4 and/or Csl4 subunits.

It localises to the cytoplasm. Functionally, catalytic component of the exosome, which is a complex involved in RNA degradation. Has 3'-&gt;5' exoribonuclease activity. Can also synthesize heteromeric RNA-tails. This chain is Exosome complex component Rrp41, found in Thermococcus onnurineus (strain NA1).